Consider the following 147-residue polypeptide: D-aminoacyl-tRNA deacylase (147 aa).

Residues 136–137 (GP) carry the Gly-cisPro motif, important for rejection of L-amino acids motif.

Belongs to the DTD family. In terms of assembly, homodimer.

It localises to the cytoplasm. The enzyme catalyses glycyl-tRNA(Ala) + H2O = tRNA(Ala) + glycine + H(+). It carries out the reaction a D-aminoacyl-tRNA + H2O = a tRNA + a D-alpha-amino acid + H(+). In terms of biological role, an aminoacyl-tRNA editing enzyme that deacylates mischarged D-aminoacyl-tRNAs. Also deacylates mischarged glycyl-tRNA(Ala), protecting cells against glycine mischarging by AlaRS. Acts via tRNA-based rather than protein-based catalysis; rejects L-amino acids rather than detecting D-amino acids in the active site. By recycling D-aminoacyl-tRNA to D-amino acids and free tRNA molecules, this enzyme counteracts the toxicity associated with the formation of D-aminoacyl-tRNA entities in vivo and helps enforce protein L-homochirality. This Sulfurihydrogenibium sp. (strain YO3AOP1) protein is D-aminoacyl-tRNA deacylase.